Reading from the N-terminus, the 228-residue chain is Thymidine kinase (228 aa).

Residue 23–30 participates in ATP binding; the sequence is GNIGCGKS. Catalysis depends on glutamate 50, which acts as the Proton acceptor. Substrate is bound by residues tyrosine 68, glutamine 79, and phenylalanine 109. Position 157 (arginine 157) interacts with ATP.

Belongs to the DCK/DGK family.

The catalysed reaction is thymidine + ATP = dTMP + ADP + H(+). In Ictaluridae (bullhead catfishes), this protein is Thymidine kinase (TK).